Consider the following 381-residue polypeptide: 1-deoxy-D-xylulose 5-phosphate reductoisomerase (381 aa).

Residues Thr10, Gly11, Ser12, Ile13, Gly36, Lys37, Asn38, and Asn122 each coordinate NADPH. 1-deoxy-D-xylulose 5-phosphate is bound at residue Lys123. An NADPH-binding site is contributed by Glu124. Mn(2+) is bound at residue Asp148. 4 residues coordinate 1-deoxy-D-xylulose 5-phosphate: Ser149, Glu150, Ser173, and His196. Glu150 lines the Mn(2+) pocket. Gly202 contributes to the NADPH binding site. 1-deoxy-D-xylulose 5-phosphate-binding residues include Ser209, Asn214, Lys215, and Glu218. Mn(2+) is bound at residue Glu218.

It belongs to the DXR family. Requires Mg(2+) as cofactor. It depends on Mn(2+) as a cofactor.

The enzyme catalyses 2-C-methyl-D-erythritol 4-phosphate + NADP(+) = 1-deoxy-D-xylulose 5-phosphate + NADPH + H(+). It functions in the pathway isoprenoid biosynthesis; isopentenyl diphosphate biosynthesis via DXP pathway; isopentenyl diphosphate from 1-deoxy-D-xylulose 5-phosphate: step 1/6. Its function is as follows. Catalyzes the NADPH-dependent rearrangement and reduction of 1-deoxy-D-xylulose-5-phosphate (DXP) to 2-C-methyl-D-erythritol 4-phosphate (MEP). In Desulfitobacterium hafniense (strain DSM 10664 / DCB-2), this protein is 1-deoxy-D-xylulose 5-phosphate reductoisomerase.